A 1217-amino-acid polypeptide reads, in one-letter code: Nuclear matrix constituent protein 1 (1217 aa).

Residues 1-14 (MLTPQRSAWSLKSK) show a composition bias toward polar residues. Residues 1–45 (MLTPQRSAWSLKSKVSSEKPRSKGKGITKNLDSAATPFPPLGLLN) are disordered. Residues 159-746 (VTDLEKALRE…KNQRAEFIKE (588 aa)) are a coiled coil. Positions 892–904 (SEDAAANDNNPAA) are enriched in low complexity. Disordered regions lie at residues 892-969 (SEDA…VVDD), 981-1057 (EEAK…VQAP), 1087-1117 (VQTK…HKVT), and 1152-1217 (ISEM…FFTT). The segment covering 947-960 (STRRGRGGKTVRRT) has biased composition (basic residues). Composition is skewed to polar residues over residues 986–1007 (SSQQ…TSNT) and 1087–1103 (VQTK…NQIS). Low complexity predominate over residues 1173-1186 (EEPATPSSGSSTSG). The span at 1189 to 1200 (GNDDDMDDDDEE) shows a compositional bias: acidic residues.

Belongs to the CRWN family.

It localises to the nucleus matrix. It is found in the nucleus lamina. Architectural component of nuclear structure that plays different roles in controlling nuclear size and morphology. Involved in the organization of multimeric complexes in the peripheral nucleoskeleton. This is Nuclear matrix constituent protein 1 from Allium cepa (Onion).